The primary structure comprises 573 residues: Thiol:disulfide interchange protein DsbD (573 aa).

An N-terminal signal peptide occupies residues 1-20; it reads MLKRFFLLLSSLLLVCNVQA. The Periplasmic portion of the chain corresponds to 21–175; it reads GLFNNKPQYL…AENLSNNYLS (155 aa). 2 disulfide bridges follow: cysteine 121-cysteine 126 and cysteine 191-cysteine 313. A helical transmembrane segment spans residues 176 to 196; sequence IFGFLLLGIGLAFTPCVLPML. The Cytoplasmic segment spans residues 197-227; it reads PLLSAIVIGHKNRPNTSRALLLSFTYVQGMA. A helical membrane pass occupies residues 228–248; it reads LTYTLLGLTVAAIGLPFQVAL. Residues 249-251 lie on the Periplasmic side of the membrane; the sequence is QSP. Residues 252–272 traverse the membrane as a helical segment; it reads AVLISLAVLFTLLAASMFGLF. Topologically, residues 273–292 are cytoplasmic; sequence EIRLPNTWQQKLNALSQQQQ. A helical membrane pass occupies residues 293 to 313; it reads GGAVGNVFIMGIIAGLVASPC. Residues 314–331 lie on the Periplasmic side of the membrane; the sequence is TSAPLSGALLYVAQSGNL. A helical transmembrane segment spans residues 332–352; sequence LIGGLALYLLALGMGLPLILI. At 353 to 365 the chain is on the cytoplasmic side; the sequence is TVFGNQILPKSGE. A helical transmembrane segment spans residues 366-386; sequence WLFKVKTAFGFVMLALPIFLI. Over 387–393 the chain is Periplasmic; sequence SRILPSH. A helical membrane pass occupies residues 394–414; sequence YEPFLWSTLALAFLGWLISSL. Over 415–425 the chain is Cytoplasmic; the sequence is NYSTMLKQAVR. Residues 426–446 traverse the membrane as a helical segment; that stretch reads ILLFIAFGLTAYPWANLVWQT. The Thioredoxin domain occupies 440-573; the sequence is ANLVWQTTSN…NQFLAWLNRL (134 aa). The Periplasmic portion of the chain corresponds to 447 to 573; that stretch reads TSNTAQPTTP…NQFLAWLNRL (127 aa). A disulfide bond links cysteine 490 and cysteine 493.

It belongs to the thioredoxin family. DsbD subfamily.

It is found in the cell inner membrane. The catalysed reaction is [protein]-dithiol + NAD(+) = [protein]-disulfide + NADH + H(+). It catalyses the reaction [protein]-dithiol + NADP(+) = [protein]-disulfide + NADPH + H(+). Its function is as follows. Required to facilitate the formation of correct disulfide bonds in some periplasmic proteins and for the assembly of the periplasmic c-type cytochromes. Acts by transferring electrons from cytoplasmic thioredoxin to the periplasm. This transfer involves a cascade of disulfide bond formation and reduction steps. This is Thiol:disulfide interchange protein DsbD from Haemophilus ducreyi (strain 35000HP / ATCC 700724).